A 197-amino-acid chain; its full sequence is Holliday junction branch migration complex subunit RuvA (197 aa).

The interval 1 to 64 is domain I; it reads MIDSIVGTIQ…LSELECYGFL (64 aa). Residues 65-143 form a domain II region; sequence TREERELFLK…KEFKVASTSG (79 aa). Residues 144 to 152 form a flexible linker region; the sequence is TEEKTYEKL. Residues 152–197 are domain III; the sequence is LEEISLALLSLGYEIDEINQVLSSEDFSELSLEDGIKLALKKLSKI.

The protein belongs to the RuvA family. As to quaternary structure, homotetramer. Forms an RuvA(8)-RuvB(12)-Holliday junction (HJ) complex. HJ DNA is sandwiched between 2 RuvA tetramers; dsDNA enters through RuvA and exits via RuvB. An RuvB hexamer assembles on each DNA strand where it exits the tetramer. Each RuvB hexamer is contacted by two RuvA subunits (via domain III) on 2 adjacent RuvB subunits; this complex drives branch migration. In the full resolvosome a probable DNA-RuvA(4)-RuvB(12)-RuvC(2) complex forms which resolves the HJ.

The protein localises to the cytoplasm. Functionally, the RuvA-RuvB-RuvC complex processes Holliday junction (HJ) DNA during genetic recombination and DNA repair, while the RuvA-RuvB complex plays an important role in the rescue of blocked DNA replication forks via replication fork reversal (RFR). RuvA specifically binds to HJ cruciform DNA, conferring on it an open structure. The RuvB hexamer acts as an ATP-dependent pump, pulling dsDNA into and through the RuvAB complex. HJ branch migration allows RuvC to scan DNA until it finds its consensus sequence, where it cleaves and resolves the cruciform DNA. In Caldicellulosiruptor saccharolyticus (strain ATCC 43494 / DSM 8903 / Tp8T 6331), this protein is Holliday junction branch migration complex subunit RuvA.